A 498-amino-acid polypeptide reads, in one-letter code: MASQGTKRSYEQMETDGERQNATEIRASVGKMIDGIGRFYIQMCTELKLSDYEGRLIQNSLTIERMVLSAFDERRNRYLEEHPSAGKDPKKTGGPIYKRVGGRWMRELVLYDKEEIRRIWRQANNGDDATRGLTHMMIWHSNLNDTTYQRTRALVRTGMDPRMCSLMQGSTLPRRSGAAGAAVKGIGTMVMELIRMIKRGINDRNFWRGENGRKTRSAYERMCNILKGKFQTAAQRAMMDQVRESRNPGNAEIEDLIFSARSALILRGSVAHKSCLPACVYGPAVSSGYDFEKEGYSLVGIDPFKLLQNSQVYSLIRPNENPAHKSQLVWMACHSAAFEDLRLLSFIRGTKVSPRGKLSTRGVQIASNENMDNMESSTLELRSRYWAIRTRSGGNTNQQRASAGQISVQPTFSVQRNLPFEKSTVMAAFTGNTEGRTSDMRAEIIRLMEGAKPEEVSFRGRGVFELSDEKATNPIVPSFDMSNEGSYFFGDNAEEYDN.

The Unconventional nuclear localization signal motif lies at 1 to 18 (MASQGTKRSYEQMETDGE). Positions 1–21 (MASQGTKRSYEQMETDGERQN) are disordered. Over residues 8-21 (RSYEQMETDGERQN) the composition is skewed to basic and acidic residues. Residues 198 to 216 (KRGINDRNFWRGENGRKTR) carry the Bipartite nuclear localization signal motif.

This sequence belongs to the influenza viruses nucleoprotein family. In terms of assembly, homomultimerizes to form the nucleocapsid. May bind host exportin-1/XPO1. Binds to viral genomic RNA. Protein-RNA contacts are mediated by a combination of electrostatic interactions between positively charged residues and the phosphate backbone and planar interactions between aromatic side chains and bases. Late in virus-infected cells, may be cleaved from a 56-kDa protein to a 53-kDa protein by a cellular caspase. This cleavage might be a marker for the onset of apoptosis in infected cells or have a specific function in virus host interaction.

The protein resides in the virion. It localises to the host nucleus. Encapsidates the negative strand viral RNA, protecting it from nucleases. The encapsidated genomic RNA is termed the ribonucleoprotein (RNP) and serves as template for transcription and replication. The RNP needs to be localized in the host nucleus to start an infectious cycle, but is too large to diffuse through the nuclear pore complex. NP comprises at least 2 nuclear localization signals that are responsible for the active RNP import into the nucleus through cellular importin alpha/beta pathway. Later in the infection, nclear export of RNPs are mediated through viral proteins NEP interacting with M1 which binds nucleoproteins. It is possible that nucleoprotein binds directly host exportin-1/XPO1 and plays an active role in RNPs nuclear export. M1 interaction with RNP seems to hide nucleoprotein's nuclear localization signals. Soon after a virion infects a new cell, M1 dissociates from the RNP under acidification of the virion driven by M2 protein. Dissociation of M1 from RNP unmasks nucleoprotein's nuclear localization signals, targeting the RNP to the nucleus. The polypeptide is Nucleoprotein (Aves (whales)).